The chain runs to 110 residues: Quaternary ammonium compound-resistance protein QacE (110 aa).

4 consecutive transmembrane segments (helical) span residues 1–21 (MKGW…TSAL), 30–50 (LAPS…LSLV), 58–78 (VAYA…AWLL), and 85–105 (AWGF…NLLS).

It belongs to the drug/metabolite transporter (DMT) superfamily. Small multidrug resistance (SMR) (TC 2.A.7.1) family.

It is found in the cell membrane. Multidrug exporter. Is implicated for the resistance to bacteriocidal quaternary ammonium compounds. The sequence is that of Quaternary ammonium compound-resistance protein QacE (qacE) from Escherichia coli.